The chain runs to 298 residues: Short-chain dehydrogenase/reductase prx6 (298 aa).

7 residues coordinate NADP(+): isoleucine 27, aspartate 70, asparagine 97, tyrosine 174, lysine 178, valine 208, and threonine 210. The active-site Proton acceptor is tyrosine 174. Lysine 178 (lowers pKa of active site Tyr) is an active-site residue.

The protein belongs to the short-chain dehydrogenases/reductases (SDR) family.

Its pathway is sesquiterpene biosynthesis. In terms of biological role, short-chain dehydrogenase/reductase; part of the gene cluster that mediates the biosynthesis of PR-toxin, a bicyclic sesquiterpene belonging to the eremophilane class and acting as a mycotoxin. The first step of the pathway is catalyzed by the aristolochene synthase which performs the cyclization of trans,trans-farnesyl diphosphate (FPP) to the bicyclic sesquiterpene aristolochene. Following the formation of aristolochene, the non-oxygenated aristolochene is converted to the trioxygenated intermediate eremofortin B, via 7-epi-neopetasone. This conversion appears to involve three enzymes, a hydroxysterol oxidase-like enzyme, the quinone-oxidase prx3 that forms the quinone-type-structure in the bicyclic nucleus of aristolochene with the C8-oxo group and the C-3 hydroxyl group, and the P450 monooxygenase prx9 that introduces the epoxide at the double bond between carbons 1 and 2. No monoxy or dioxy-intermediates have been reported to be released to the broth, so these three early oxidative reactions may be coupled together. Eremofortin B is further oxidized by another P450 monooxygenase, that introduces a second epoxide between carbons 7 and 11 prior to acetylation to eremofortin A by the acetyltransferase prx11. The second epoxidation may be performed by a second P450 monooxygenase. After the acetylation step, eremofortin A is converted to eremofortin C and then to PR-toxin. First the conversion of eremofortin A to eremofortin C proceeds by oxidation of the side chain of the molecule at C-12 and is catalyzed by the short-chain oxidoreductase prx1. The cytochrome P450 monooxygenase prx8 also plays a role in this step. The primary alcohol formed at C-12 is finally oxidized by the short-chain alcohol dehydrogenase prx4 that forms PR-toxin. This is Short-chain dehydrogenase/reductase prx6 from Penicillium rubens (strain ATCC 28089 / DSM 1075 / NRRL 1951 / Wisconsin 54-1255) (Penicillium chrysogenum).